A 419-amino-acid chain; its full sequence is Multidrug efflux pump Tap (419 aa).

Helical transmembrane passes span 7-29, 44-66, 73-95, 100-122, 149-171, 175-197, 218-240, 260-282, 289-308, 313-335, 348-370, and 375-397; these read GPAF…SIVA, ASIV…GTAV, RVSM…VAWG, AVNV…AGMT, ILNL…VGGI, WITA…EGAG, FVWN…ALYL, LGWA…AVLA, VTMS…IAFL, VIMV…YNYV, VVGV…AGPL, and GLHA…AIRL.

The protein belongs to the major facilitator superfamily. Drug:H(+) antiporter-3 (DHA3) (TC 2.A.1.21) family.

The protein resides in the cell inner membrane. With respect to regulation, inhibited by piperine, verapamil and verapamil analogs. Functionally, efflux pump that contributes to intrinsic antibiotic resistance. The pump uses the electrochemical gradient as a source of energy. Confers resistance to rifampicin. Confers low-level resistance to tetracycline and to several aminoglycosides, including streptomycin, gentamicin, 2'-N-ethylnetilmicin and 6'-N-ethylnetilmicin. The chain is Multidrug efflux pump Tap from Mycobacterium tuberculosis (strain ATCC 25618 / H37Rv).